We begin with the raw amino-acid sequence, 396 residues long: Acetate kinase (396 aa).

Asn-8 lines the Mg(2+) pocket. Lys-15 contacts ATP. Arg-89 contributes to the substrate binding site. Asp-146 serves as the catalytic Proton donor/acceptor. ATP-binding positions include 206 to 210 (HIGNG), 283 to 285 (DMR), and 331 to 335 (GVGEN). Mg(2+) is bound at residue Glu-383.

Belongs to the acetokinase family. In terms of assembly, homodimer. It depends on Mg(2+) as a cofactor. The cofactor is Mn(2+).

It is found in the cytoplasm. The enzyme catalyses acetate + ATP = acetyl phosphate + ADP. The protein operates within metabolic intermediate biosynthesis; acetyl-CoA biosynthesis; acetyl-CoA from acetate: step 1/2. Its function is as follows. Catalyzes the formation of acetyl phosphate from acetate and ATP. Can also catalyze the reverse reaction. The chain is Acetate kinase from Streptococcus pneumoniae (strain ATCC 700669 / Spain 23F-1).